The sequence spans 72 residues: Translation initiation factor IF-1 (72 aa).

Residues 1 to 72 (MAKEDVIEVE…NRGRIIYRFK (72 aa)) enclose the S1-like domain.

It belongs to the IF-1 family. As to quaternary structure, component of the 30S ribosomal translation pre-initiation complex which assembles on the 30S ribosome in the order IF-2 and IF-3, IF-1 and N-formylmethionyl-tRNA(fMet); mRNA recruitment can occur at any time during PIC assembly.

The protein resides in the cytoplasm. One of the essential components for the initiation of protein synthesis. Stabilizes the binding of IF-2 and IF-3 on the 30S subunit to which N-formylmethionyl-tRNA(fMet) subsequently binds. Helps modulate mRNA selection, yielding the 30S pre-initiation complex (PIC). Upon addition of the 50S ribosomal subunit IF-1, IF-2 and IF-3 are released leaving the mature 70S translation initiation complex. This is Translation initiation factor IF-1 from Syntrophomonas wolfei subsp. wolfei (strain DSM 2245B / Goettingen).